Consider the following 208-residue polypeptide: FMN-dependent NADH:quinone oxidoreductase (208 aa).

Residues 17–19 (SNS), 99–102 (MWNL), and 143–146 (SRGG) each bind FMN.

The protein belongs to the azoreductase type 1 family. In terms of assembly, homodimer. Requires FMN as cofactor.

It carries out the reaction 2 a quinone + NADH + H(+) = 2 a 1,4-benzosemiquinone + NAD(+). It catalyses the reaction N,N-dimethyl-1,4-phenylenediamine + anthranilate + 2 NAD(+) = 2-(4-dimethylaminophenyl)diazenylbenzoate + 2 NADH + 2 H(+). In terms of biological role, quinone reductase that provides resistance to thiol-specific stress caused by electrophilic quinones. Its function is as follows. Also exhibits azoreductase activity. Catalyzes the reductive cleavage of the azo bond in aromatic azo compounds to the corresponding amines. This Staphylococcus aureus (strain bovine RF122 / ET3-1) protein is FMN-dependent NADH:quinone oxidoreductase.